The primary structure comprises 27 residues: Histone H1.3, embryonic (27 aa).

The H15 domain maps to 1-27 (HVVAAITALKERGGSSHQALKKYKAAN).

The protein belongs to the histone H1/H5 family.

The protein localises to the nucleus. It localises to the chromosome. Its function is as follows. Histones H1 are necessary for the condensation of nucleosome chains into higher-order structures. This Parechinus angulosus (Angulate sea urchin) protein is Histone H1.3, embryonic.